The following is a 498-amino-acid chain: ATP synthase subunit beta, chloroplastic (498 aa).

A Phosphothreonine modification is found at Thr-6. Ser-13 carries the post-translational modification Phosphoserine. Position 172-179 (172-179) interacts with ATP; that stretch reads GGAGVGKT.

This sequence belongs to the ATPase alpha/beta chains family. F-type ATPases have 2 components, CF(1) - the catalytic core - and CF(0) - the membrane proton channel. CF(1) has five subunits: alpha(3), beta(3), gamma(1), delta(1), epsilon(1). CF(0) has four main subunits: a(1), b(1), b'(1) and c(9-12).

It localises to the plastid. The protein resides in the chloroplast thylakoid membrane. It carries out the reaction ATP + H2O + 4 H(+)(in) = ADP + phosphate + 5 H(+)(out). In terms of biological role, produces ATP from ADP in the presence of a proton gradient across the membrane. The catalytic sites are hosted primarily by the beta subunits. This chain is ATP synthase subunit beta, chloroplastic, found in Barbarea verna (Land cress).